The following is a 96-amino-acid chain: Cobalt transport protein CbiN (96 aa).

Transmembrane regions (helical) follow at residues Trp-4–Gly-24 and Ile-59–Leu-79.

This sequence belongs to the CbiN family. Forms an energy-coupling factor (ECF) transporter complex composed of an ATP-binding protein (A component, CbiO), a transmembrane protein (T component, CbiQ) and 2 possible substrate-capture proteins (S components, CbiM and CbiN) of unknown stoichimetry.

The protein resides in the cell membrane. The protein operates within cofactor biosynthesis; adenosylcobalamin biosynthesis. Part of the energy-coupling factor (ECF) transporter complex CbiMNOQ involved in cobalt import. In Halobacterium salinarum (strain ATCC 29341 / DSM 671 / R1), this protein is Cobalt transport protein CbiN.